The following is a 449-amino-acid chain: Tubulin beta chain (449 aa).

GTP contacts are provided by glutamine 11, glutamate 69, serine 138, glycine 142, threonine 143, glycine 144, asparagine 204, and asparagine 226. Glutamate 69 contacts Mg(2+). The segment at 426-449 (QDATAEEEGEFDEEEGVMDAEGAA) is disordered. A compositionally biased stretch (acidic residues) spans 429–443 (TAEEEGEFDEEEGVM).

It belongs to the tubulin family. Dimer of alpha and beta chains. A typical microtubule is a hollow water-filled tube with an outer diameter of 25 nm and an inner diameter of 15 nM. Alpha-beta heterodimers associate head-to-tail to form protofilaments running lengthwise along the microtubule wall with the beta-tubulin subunit facing the microtubule plus end conferring a structural polarity. Microtubules usually have 13 protofilaments but different protofilament numbers can be found in some organisms and specialized cells. It depends on Mg(2+) as a cofactor.

It is found in the cytoplasm. It localises to the cytoskeleton. In terms of biological role, tubulin is the major constituent of microtubules, a cylinder consisting of laterally associated linear protofilaments composed of alpha- and beta-tubulin heterodimers. Microtubules grow by the addition of GTP-tubulin dimers to the microtubule end, where a stabilizing cap forms. Below the cap, tubulin dimers are in GDP-bound state, owing to GTPase activity of alpha-tubulin. The sequence is that of Tubulin beta chain from Eimeria tenella (Coccidian parasite).